A 245-amino-acid chain; its full sequence is Thiopurine S-methyltransferase (245 aa).

Serine 14 bears the Phosphoserine mark. 29-40 (WQDKWVNGKTAF) is a binding site for S-adenosyl-L-methionine. Phenylalanine 40 contributes to the substrate binding site. Lysine 58 bears the N6-acetyllysine mark. S-adenosyl-L-methionine-binding positions include leucine 69, glutamate 90, 134–135 (SI), and arginine 152.

It belongs to the class I-like SAM-binding methyltransferase superfamily. TPMT family. In terms of assembly, monomer.

Its subcellular location is the cytoplasm. The catalysed reaction is S-adenosyl-L-methionine + a thiopurine = S-adenosyl-L-homocysteine + a thiopurine S-methylether.. It carries out the reaction mercaptopurine + S-adenosyl-L-methionine = 6-methylthiopurine + S-adenosyl-L-homocysteine + H(+). It catalyses the reaction 6-thioguanine + S-adenosyl-L-methionine = 6-methylthioguanine + S-adenosyl-L-homocysteine + H(+). Its activity is regulated as follows. Inhibited by S-adenosyl-L-homocysteine (SAH). Functionally, catalyzes the S-methylation of thiopurine drugs such as 6-mercaptopurine (also called mercaptopurine, 6-MP or its brand name Purinethol) and 6-thioguanine (also called tioguanine or 6-TG) using S-adenosyl-L-methionine as the methyl donor. TPMT activity modulates the cytotoxic effects of thiopurine prodrugs. A natural substrate for this enzyme has yet to be identified. The protein is Thiopurine S-methyltransferase (TPMT) of Homo sapiens (Human).